The chain runs to 334 residues: Cytosolic Fe-S cluster assembly factor NBP35 (334 aa).

Positions 33, 47, 50, and 56 each coordinate [4Fe-4S] cluster. 86 to 93 (GKGGVGKS) contributes to the ATP binding site. [4Fe-4S] cluster contacts are provided by Cys-259 and Cys-262.

Belongs to the Mrp/NBP35 ATP-binding proteins family. NUBP1/NBP35 subfamily. Heterotetramer of 2 NBP35 and 2 CFD1 chains. The cofactor is [4Fe-4S] cluster.

Its subcellular location is the cytoplasm. The protein localises to the nucleus. Component of the cytosolic iron-sulfur (Fe/S) protein assembly (CIA) machinery. Required for maturation of extramitochondrial Fe-S proteins. The NBP35-CFD1 heterotetramer forms a Fe-S scaffold complex, mediating the de novo assembly of an Fe-S cluster and its transfer to target apoproteins. Required for biogenesis and export of both ribosomal subunits, which may reflect a role in assembly of the Fe/S clusters in RLI1, a protein which performs rRNA processing and ribosome export. This is Cytosolic Fe-S cluster assembly factor NBP35 from Candida glabrata (strain ATCC 2001 / BCRC 20586 / JCM 3761 / NBRC 0622 / NRRL Y-65 / CBS 138) (Yeast).